Consider the following 284-residue polypeptide: 4-hydroxybenzoate octaprenyltransferase (284 aa).

A run of 9 helical transmembrane segments spans residues 19–39 (IPIL…SHGL), 42–62 (ISYL…GCII), 85–105 (GQLS…VAFI), 107–127 (VLFL…LAIL), 134–154 (FFAI…FMAF), 165–185 (AWIF…IYAL), 211–231 (ILLF…YCDF), 233–253 (SFFY…YFLY), and 261–281 (CINA…IAVI).

This sequence belongs to the UbiA prenyltransferase family. Mg(2+) serves as cofactor.

It is found in the cell inner membrane. The enzyme catalyses all-trans-octaprenyl diphosphate + 4-hydroxybenzoate = 4-hydroxy-3-(all-trans-octaprenyl)benzoate + diphosphate. Its pathway is cofactor biosynthesis; ubiquinone biosynthesis. In terms of biological role, catalyzes the prenylation of para-hydroxybenzoate (PHB) with an all-trans polyprenyl group. Mediates the second step in the final reaction sequence of ubiquinone-8 (UQ-8) biosynthesis, which is the condensation of the polyisoprenoid side chain with PHB, generating the first membrane-bound Q intermediate 3-octaprenyl-4-hydroxybenzoate. This chain is 4-hydroxybenzoate octaprenyltransferase, found in Francisella tularensis subsp. holarctica (strain LVS).